The sequence spans 622 residues: Histone-lysine N-methyltransferase set9 (622 aa).

In terms of domain architecture, SET spans 120 to 234 (SPFEITTTNR…IGEEITVSYG (115 aa)). Disordered stretches follow at residues 262 to 314 (VPSE…GKFV), 335 to 394 (QPAG…TTAT), 427 to 470 (PTTS…RGKP), and 576 to 622 (DRGV…RMTM). Over residues 265–285 (EPQSKASTPALNDDTLSTDSH) the composition is skewed to polar residues. The segment covering 376-394 (PPSTAANESERSSTSTTAT) has biased composition (low complexity). 2 stretches are compositionally biased toward polar residues: residues 427-437 (PTTSLRSGSTE) and 446-458 (DQPSTLKQGSIGS). The segment covering 590-607 (SEPRTETEGSEGCEDRRT) has biased composition (basic and acidic residues). A compositionally biased stretch (basic residues) spans 608-622 (TRASRRRTRSLRMTM).

The protein belongs to the class V-like SAM-binding methyltransferase superfamily. Histone-lysine methyltransferase family. Suvar4-20 subfamily.

It localises to the nucleus. The protein localises to the chromosome. The catalysed reaction is L-lysyl(20)-[histone H4] + 3 S-adenosyl-L-methionine = N(6),N(6),N(6)-trimethyl-L-lysyl(20)-[histone H4] + 3 S-adenosyl-L-homocysteine + 3 H(+). In terms of biological role, histone methyltransferase that trimethylates 'Lys-20' of histone H4 to form H4K20me3. In Aspergillus fumigatus (strain ATCC MYA-4609 / CBS 101355 / FGSC A1100 / Af293) (Neosartorya fumigata), this protein is Histone-lysine N-methyltransferase set9 (set9).